The chain runs to 84 residues: Large ribosomal subunit protein bL27 (84 aa).

The tract at residues 1–21 (MAHKKGGGSTKNGRDSNPKYL) is disordered.

This sequence belongs to the bacterial ribosomal protein bL27 family.

This chain is Large ribosomal subunit protein bL27, found in Chlorobium limicola (strain DSM 245 / NBRC 103803 / 6330).